Reading from the N-terminus, the 322-residue chain is HPr kinase/phosphorylase (322 aa).

Active-site residues include histidine 146 and lysine 167. 161 to 168 (GDSGLGKS) serves as a coordination point for ATP. Serine 168 lines the Mg(2+) pocket. Catalysis depends on aspartate 185, which acts as the Proton acceptor; for phosphorylation activity. Proton donor; for dephosphorylation activity. The interval 209-218 (LEVRGLGLLD) is important for the catalytic mechanism of both phosphorylation and dephosphorylation. Glutamate 210 contributes to the Mg(2+) binding site. Arginine 250 is a catalytic residue. Residues 271 to 276 (QVAAGR) form an important for the catalytic mechanism of dephosphorylation region.

It belongs to the HPrK/P family. In terms of assembly, homohexamer. The cofactor is Mg(2+).

The enzyme catalyses [HPr protein]-L-serine + ATP = [HPr protein]-O-phospho-L-serine + ADP + H(+). It carries out the reaction [HPr protein]-O-phospho-L-serine + phosphate + H(+) = [HPr protein]-L-serine + diphosphate. Functionally, catalyzes the ATP- as well as the pyrophosphate-dependent phosphorylation of a specific serine residue in HPr, a phosphocarrier protein of the phosphoenolpyruvate-dependent sugar phosphotransferase system (PTS). HprK/P also catalyzes the pyrophosphate-producing, inorganic phosphate-dependent dephosphorylation (phosphorolysis) of seryl-phosphorylated HPr (P-Ser-HPr). This is HPr kinase/phosphorylase from Burkholderia lata (strain ATCC 17760 / DSM 23089 / LMG 22485 / NCIMB 9086 / R18194 / 383).